We begin with the raw amino-acid sequence, 86 residues long: Translation initiation factor IF-1 (86 aa).

Positions 1–72 (MPKDDVIKME…TKGRIVYRKK (72 aa)) constitute an S1-like domain.

This sequence belongs to the IF-1 family. Component of the 30S ribosomal translation pre-initiation complex which assembles on the 30S ribosome in the order IF-2 and IF-3, IF-1 and N-formylmethionyl-tRNA(fMet); mRNA recruitment can occur at any time during PIC assembly.

The protein resides in the cytoplasm. In terms of biological role, one of the essential components for the initiation of protein synthesis. Stabilizes the binding of IF-2 and IF-3 on the 30S subunit to which N-formylmethionyl-tRNA(fMet) subsequently binds. Helps modulate mRNA selection, yielding the 30S pre-initiation complex (PIC). Upon addition of the 50S ribosomal subunit IF-1, IF-2 and IF-3 are released leaving the mature 70S translation initiation complex. This chain is Translation initiation factor IF-1, found in Pseudothermotoga lettingae (strain ATCC BAA-301 / DSM 14385 / NBRC 107922 / TMO) (Thermotoga lettingae).